The sequence spans 210 residues: Uracil phosphoribosyltransferase (210 aa).

5-phospho-alpha-D-ribose 1-diphosphate contacts are provided by residues Arg-78, Arg-103, and 130-138 (DPMLATGGT). Residues Ile-193 and 198 to 200 (GDA) contribute to the uracil site. A 5-phospho-alpha-D-ribose 1-diphosphate-binding site is contributed by Asp-199.

The protein belongs to the UPRTase family. It depends on Mg(2+) as a cofactor.

The catalysed reaction is UMP + diphosphate = 5-phospho-alpha-D-ribose 1-diphosphate + uracil. It participates in pyrimidine metabolism; UMP biosynthesis via salvage pathway; UMP from uracil: step 1/1. With respect to regulation, allosterically activated by GTP. Functionally, catalyzes the conversion of uracil and 5-phospho-alpha-D-ribose 1-diphosphate (PRPP) to UMP and diphosphate. The sequence is that of Uracil phosphoribosyltransferase from Xanthomonas campestris pv. campestris (strain 8004).